The sequence spans 387 residues: Thermostable celloxylanase (387 aa).

The 342-residue stretch at 41 to 382 folds into the GH10 domain; the sequence is AEDIPSLAEA…KPAFWAIVDP (342 aa). The Proton donor role is filled by Glu-185. Glu-293 functions as the Nucleophile in the catalytic mechanism.

This sequence belongs to the glycosyl hydrolase 10 (cellulase F) family.

It carries out the reaction Endohydrolysis of (1-&gt;4)-beta-D-glucosidic linkages in cellulose, lichenin and cereal beta-D-glucans.. It catalyses the reaction Endohydrolysis of (1-&gt;4)-beta-D-xylosidic linkages in xylans.. Its pathway is glycan degradation; xylan degradation. Active toward xylan, carboxymethylcellulose, P-nitrophenyl-beta-D-xylopyranoside and P-nitrophenyl-beta-D-cellobioside. This is Thermostable celloxylanase (xynB) from Thermoclostridium stercorarium (Clostridium stercorarium).